The primary structure comprises 101 residues: Small ribosomal subunit protein uS14 (101 aa).

The segment at A36–R61 is disordered. Polar residues predominate over residues K47–R59.

The protein belongs to the universal ribosomal protein uS14 family. In terms of assembly, part of the 30S ribosomal subunit. Contacts proteins S3 and S10.

Its function is as follows. Binds 16S rRNA, required for the assembly of 30S particles and may also be responsible for determining the conformation of the 16S rRNA at the A site. In Methylobacillus flagellatus (strain ATCC 51484 / DSM 6875 / VKM B-1610 / KT), this protein is Small ribosomal subunit protein uS14.